A 461-amino-acid polypeptide reads, in one-letter code: Asparagine--tRNA ligase (461 aa).

It belongs to the class-II aminoacyl-tRNA synthetase family. As to quaternary structure, homodimer.

Its subcellular location is the cytoplasm. The enzyme catalyses tRNA(Asn) + L-asparagine + ATP = L-asparaginyl-tRNA(Asn) + AMP + diphosphate + H(+). The protein is Asparagine--tRNA ligase of Geobacter metallireducens (strain ATCC 53774 / DSM 7210 / GS-15).